Here is a 629-residue protein sequence, read N- to C-terminus: Embryonic polyadenylate-binding protein A (629 aa).

RRM domains follow at residues 11–89, 99–175, 191–268, and 294–370; these read ASLY…WSQR, GNVF…HFKS, TNVY…RAQK, and VNLY…LAQR. Residues 539-616 form the PABC domain; the sequence is QEPLTASLLA…AVAVLQAHQA (78 aa).

The protein belongs to the polyadenylate-binding protein type-1 family. Interacts with dazl in an RNA-independent manner. The C-terminus can self-associate and also interact with the C-terminus of pabpc1, independently of RNA. RRM 1 and RRM 2 interact with both eif4g1 and paip1, and the C-terminus also interacts with paip1. Prior to oocyte maturation, found in a complex with dazl and pum2 proteins and spdy1 mRNA; pum2 dissociates from the complex during maturation. Interacts with the translation termination factor sup35/erf3. As to expression, expressed in adult testis, but at a reduced level compared to oocytes.

The protein resides in the cytoplasm. Binds and protects the poly(A) tail of mRNA with or without an AU-rich element (ARE) and prevents mRNA deadenylation. Stimulates the translation of mRNAs to which it is bound during early development. The chain is Embryonic polyadenylate-binding protein A (epabp-a) from Xenopus laevis (African clawed frog).